The sequence spans 231 residues: Aspartate/glutamate leucyltransferase (231 aa).

Belongs to the R-transferase family. Bpt subfamily.

The protein localises to the cytoplasm. It catalyses the reaction N-terminal L-glutamyl-[protein] + L-leucyl-tRNA(Leu) = N-terminal L-leucyl-L-glutamyl-[protein] + tRNA(Leu) + H(+). The enzyme catalyses N-terminal L-aspartyl-[protein] + L-leucyl-tRNA(Leu) = N-terminal L-leucyl-L-aspartyl-[protein] + tRNA(Leu) + H(+). Functions in the N-end rule pathway of protein degradation where it conjugates Leu from its aminoacyl-tRNA to the N-termini of proteins containing an N-terminal aspartate or glutamate. This is Aspartate/glutamate leucyltransferase from Pseudoalteromonas atlantica (strain T6c / ATCC BAA-1087).